The sequence spans 304 residues: GTPase Era (304 aa).

The Era-type G domain occupies 7-178 (KCGVVAVLGA…KNALAALMPE (172 aa)). Residues 15 to 22 (GAPNAGKS) are G1. 15-22 (GAPNAGKS) provides a ligand contact to GTP. Positions 41 to 45 (QTTRA) are G2. The tract at residues 66–69 (DTPG) is G3. Residues 66 to 70 (DTPGI) and 128 to 131 (NKVD) contribute to the GTP site. The interval 128-131 (NKVD) is G4. Residues 157–159 (VSA) form a G5 region. The KH type-2 domain maps to 209-286 (LHEELPYDSA…HLFLHVKVDE (78 aa)).

The protein belongs to the TRAFAC class TrmE-Era-EngA-EngB-Septin-like GTPase superfamily. Era GTPase family. As to quaternary structure, monomer.

The protein localises to the cytoplasm. The protein resides in the cell inner membrane. Its function is as follows. An essential GTPase that binds both GDP and GTP, with rapid nucleotide exchange. Plays a role in 16S rRNA processing and 30S ribosomal subunit biogenesis and possibly also in cell cycle regulation and energy metabolism. The sequence is that of GTPase Era from Erythrobacter litoralis (strain HTCC2594).